We begin with the raw amino-acid sequence, 297 residues long: Large ribosomal subunit protein uL18 (297 aa).

This sequence belongs to the universal ribosomal protein uL18 family. In terms of assembly, component of the large ribosomal subunit (LSU).

It localises to the cytoplasm. Its subcellular location is the nucleus. In terms of biological role, component of the ribosome, a large ribonucleoprotein complex responsible for the synthesis of proteins in the cell. The small ribosomal subunit (SSU) binds messenger RNAs (mRNAs) and translates the encoded message by selecting cognate aminoacyl-transfer RNA (tRNA) molecules. The large subunit (LSU) contains the ribosomal catalytic site termed the peptidyl transferase center (PTC), which catalyzes the formation of peptide bonds, thereby polymerizing the amino acids delivered by tRNAs into a polypeptide chain. The nascent polypeptides leave the ribosome through a tunnel in the LSU and interact with protein factors that function in enzymatic processing, targeting, and the membrane insertion of nascent chains at the exit of the ribosomal tunnel. This Lysiphlebus testaceipes (Greenbugs aphid parastoid) protein is Large ribosomal subunit protein uL18 (RpL5).